Consider the following 245-residue polypeptide: Demethylmenaquinone methyltransferase (245 aa).

S-adenosyl-L-methionine is bound by residues T62, D80, 105 to 106 (DA), and S122.

This sequence belongs to the class I-like SAM-binding methyltransferase superfamily. MenG/UbiE family.

It carries out the reaction a 2-demethylmenaquinol + S-adenosyl-L-methionine = a menaquinol + S-adenosyl-L-homocysteine + H(+). It participates in quinol/quinone metabolism; menaquinone biosynthesis; menaquinol from 1,4-dihydroxy-2-naphthoate: step 2/2. Methyltransferase required for the conversion of demethylmenaquinol (DMKH2) to menaquinol (MKH2). The chain is Demethylmenaquinone methyltransferase from Clavibacter sepedonicus (Clavibacter michiganensis subsp. sepedonicus).